Consider the following 157-residue polypeptide: Prefoldin subunit alpha (157 aa).

Belongs to the prefoldin subunit alpha family. In terms of assembly, heterohexamer of two alpha and four beta subunits.

The protein localises to the cytoplasm. Molecular chaperone capable of stabilizing a range of proteins. Seems to fulfill an ATP-independent, HSP70-like function in archaeal de novo protein folding. This is Prefoldin subunit alpha from Methanopyrus kandleri (strain AV19 / DSM 6324 / JCM 9639 / NBRC 100938).